Here is a 275-residue protein sequence, read N- to C-terminus: Dermonecrotic toxin LamSicTox-alphaIV1iii (275 aa).

H5 is a catalytic residue. Positions 25 and 27 each coordinate Mg(2+). The Nucleophile role is filled by H41. Disulfide bonds link C45–C51 and C47–C192. A Mg(2+)-binding site is contributed by D85.

The protein belongs to the arthropod phospholipase D family. Class II subfamily. Mg(2+) serves as cofactor. As to expression, expressed by the venom gland.

Its subcellular location is the secreted. It carries out the reaction an N-(acyl)-sphingosylphosphocholine = an N-(acyl)-sphingosyl-1,3-cyclic phosphate + choline. The catalysed reaction is an N-(acyl)-sphingosylphosphoethanolamine = an N-(acyl)-sphingosyl-1,3-cyclic phosphate + ethanolamine. It catalyses the reaction a 1-acyl-sn-glycero-3-phosphocholine = a 1-acyl-sn-glycero-2,3-cyclic phosphate + choline. The enzyme catalyses a 1-acyl-sn-glycero-3-phosphoethanolamine = a 1-acyl-sn-glycero-2,3-cyclic phosphate + ethanolamine. Its function is as follows. Dermonecrotic toxins cleave the phosphodiester linkage between the phosphate and headgroup of certain phospholipids (sphingolipid and lysolipid substrates), forming an alcohol (often choline) and a cyclic phosphate. This toxin acts on sphingomyelin (SM). It may also act on ceramide phosphoethanolamine (CPE), lysophosphatidylcholine (LPC) and lysophosphatidylethanolamine (LPE), but not on lysophosphatidylserine (LPS), and lysophosphatidylglycerol (LPG). It acts by transphosphatidylation, releasing exclusively cyclic phosphate products as second products. Induces dermonecrosis, hemolysis, increased vascular permeability, edema, inflammatory response, and platelet aggregation. The sequence is that of Dermonecrotic toxin LamSicTox-alphaIV1iii from Loxosceles amazonica (Recluse spider).